The sequence spans 395 residues: Elongation factor Tu (395 aa).

The 195-residue stretch at 10-204 (KPHVNVGTIG…AVDNWVPLPE (195 aa)) folds into the tr-type G domain. Residues 19–26 (GHVDHGKT) are G1. 19 to 26 (GHVDHGKT) is a GTP binding site. Residue Thr-26 participates in Mg(2+) binding. Positions 60–64 (GITIN) are G2. The segment at 81 to 84 (DCPG) is G3. GTP-binding positions include 81 to 85 (DCPGH) and 136 to 139 (NKCD). Positions 136–139 (NKCD) are G4. The G5 stretch occupies residues 174–176 (SAL).

Belongs to the TRAFAC class translation factor GTPase superfamily. Classic translation factor GTPase family. EF-Tu/EF-1A subfamily. In terms of assembly, monomer.

It localises to the cytoplasm. The catalysed reaction is GTP + H2O = GDP + phosphate + H(+). Its function is as follows. GTP hydrolase that promotes the GTP-dependent binding of aminoacyl-tRNA to the A-site of ribosomes during protein biosynthesis. The chain is Elongation factor Tu from Porphyromonas gingivalis (strain ATCC 33277 / DSM 20709 / CIP 103683 / JCM 12257 / NCTC 11834 / 2561).